A 3095-amino-acid chain; its full sequence is Centrosome-associated protein 350 (3095 aa).

Disordered stretches follow at residues 1 to 24 (MRSS…ETIQ) and 63 to 105 (TKKS…RSPL). A compositionally biased stretch (polar residues) spans 14–24 (PRNSQSKETIQ). Residues S84 and S140 each carry the phosphoserine modification. 3 disordered regions span residues 219–239 (DEMP…LNNM), 251–272 (SDSS…KRQQ), and 430–493 (KILG…RAWS). Residues 228–238 (SENNSKPSLNN) show a composition bias toward polar residues. Residues 251-265 (SDSSPSSSACNSQRS) show a composition bias toward low complexity. 2 stretches are compositionally biased toward basic and acidic residues: residues 438-457 (MEQK…ERVA) and 464-476 (GRAE…DVSH). Residue S468 is modified to Phosphoserine. Low complexity predominate over residues 481 to 491 (RSSARSRSSRA). The residue at position 503 (S503) is a Phosphoserine. 2 disordered regions span residues 538–623 (QAVR…QKNK) and 671–718 (ARQH…PPQP). Basic and acidic residues-rich tracts occupy residues 587–623 (YDTD…QKNK) and 690–699 (ESDKENKIQE). Residues 596-641 (IVRQQEERRRRQHEEKKAQKEATEQKNKRLQELYRRQREAFSKAKT) adopt a coiled-coil conformation. Residue S691 is modified to Phosphoserine. The segment covering 701–714 (PPSASSSSDLSLSE) has biased composition (low complexity). A phosphoserine mark is found at S874 and S935. The interval 977-996 (SVSEGPLLSEGSLSEEEERR) is disordered. Residues 979 to 988 (SEGPLLSEGS) show a composition bias toward low complexity. S1057 carries the post-translational modification Phosphoserine. Disordered stretches follow at residues 1099–1128 (YEDD…GSSL) and 1151–1265 (QHSS…SQKL). The span at 1119–1128 (LESQVDGSSL) shows a compositional bias: polar residues. A compositionally biased stretch (low complexity) spans 1153 to 1168 (SSGARSAGSTRSSSAS). A compositionally biased stretch (basic and acidic residues) spans 1194–1206 (DEEKVQSDSERGS). Residue S1200 is modified to Phosphoserine. Low complexity predominate over residues 1251 to 1265 (QKTPTSPLSPSSQKL). A Phosphothreonine modification is found at T1253. S1256 and S1259 each carry phosphoserine. Residues 1363 to 1402 (IKAQQQRHERDLALLKLKAEQEALECQRQLEETRNKTAQV) adopt a coiled-coil conformation. Disordered stretches follow at residues 1490–1668 (AETD…GQDS), 1720–1739 (LRDK…QRGL), 1787–1864 (KLKS…QRRQ), and 1893–2017 (AWDK…PVKS). A compositionally biased stretch (basic and acidic residues) spans 1503-1513 (QSKEGAVDSKR). Composition is skewed to low complexity over residues 1517 to 1526 (SPSRDSYSES) and 1536 to 1545 (SSGSSRQDSP). Positions 1551 to 1564 (KENEKPFHGEKMES) are enriched in basic and acidic residues. S1606 bears the Phosphoserine mark. Over residues 1624-1640 (ESHRRFNMEKKRGHHDD) the composition is skewed to basic and acidic residues. 2 positions are modified to phosphoserine: S1641 and S1646. Residues 1700 to 1793 (KALKEKTKAE…LQEKLKSAGE (94 aa)) are a coiled coil. A compositionally biased stretch (basic and acidic residues) spans 1787–1796 (KLKSAGEKKL). S1812 is subject to Phosphoserine. Residues 1819–1835 (ETRSPSPISISSSETSS) show a composition bias toward low complexity. 2 stretches are compositionally biased toward basic and acidic residues: residues 1845–1864 (SRMD…QRRQ) and 1894–1915 (WDKE…RTEQ). The stretch at 1850–1893 (KFLTKREQKLMQRRQHAEELLEWKRRLDAEEAEIQQMEKQALAA) forms a coiled coil. The residue at position 1930 (S1930) is a Phosphoserine. Positions 1980–1994 (STSPSKHSPPKSCLS) are enriched in low complexity. Residues 1999–2011 (ESSKASHRTEGHC) are compositionally biased toward basic and acidic residues. Residues 2043–2092 (IEGRIRALKDELRKRKSVVEQLKREQRKRQKERLKAQEASLLRQLETYDE) adopt a coiled-coil conformation. S2108 bears the Phosphoserine mark. 4 disordered regions span residues 2116–2155 (KTLS…GSLA), 2191–2265 (IEHL…VEDA), 2286–2427 (LSSK…EISE), and 2440–2471 (VHSE…GGTE). Residues 2133–2151 (HRSETAKTWKSVTESERSR) show a composition bias toward basic and acidic residues. S2198 is modified (phosphoserine). 2 stretches are compositionally biased toward basic and acidic residues: residues 2202 to 2214 (SSRK…RDSL) and 2227 to 2259 (NAPD…KLES). A compositionally biased stretch (polar residues) spans 2286 to 2300 (LSSKELPSDSANVQQ). A compositionally biased stretch (basic and acidic residues) spans 2301-2331 (DLDKPATETSHEKEEALKEDQSNHSTDDRSP). The segment covering 2349–2362 (DSTCSGQLSVPKES) has biased composition (polar residues). Composition is skewed to basic and acidic residues over residues 2377–2387 (ISADEISKDDS) and 2395–2407 (LRKD…DRSQ). Residues 2409 to 2420 (TRSSRSRATGSG) are compositionally biased toward low complexity. S2421 and S2450 each carry phosphoserine. A compositionally biased stretch (basic and acidic residues) spans 2455–2465 (MKSKERSDVGH). The 43-residue stretch at 2504 to 2546 (GETDFAKGFWAGVELDKPEGNNNGTYDGIVYFVCKDKHGIFAP) folds into the CAP-Gly domain. The residue at position 2671 (T2671) is a Phosphothreonine. The stretch at 2700–2731 (LLDLLTREKNQLEAQLKSSISEEKKSKQQLET) forms a coiled coil. The tract at residues 2767 to 2793 (QEFLDQKKVPPQDLPQNTEEQSPSVPS) is disordered. The segment covering 2780-2791 (LPQNTEEQSPSV) has biased composition (polar residues). 2 positions are modified to phosphoserine: S2809 and S2818.

As to quaternary structure, part of a ternary complex that contains CEP350, CEP43 and MAPRE1. Interacts (via C-terminus) directly with CEP43 (via N-terminus). Interacts with NR1H3, PPARA, PPARD and PPARG. Interacts directly with microtubules. Interacts with the fusion protein CEP43-FGFR1, and by doing so recruits and activates PI3K and PLC-gamma. Interacts with CYLD. Interacts with CFAP157. Interacts with CEP19 (via C-terminus). Interacts with CEP78; promoting CEP78 localization to centrosome and centriole. Phosphorylated during mitosis.

Its subcellular location is the cytoplasm. The protein localises to the cytoskeleton. The protein resides in the microtubule organizing center. It localises to the centrosome. It is found in the spindle. Its subcellular location is the nucleus. The protein localises to the centriole. The protein resides in the cilium basal body. Plays an essential role in centriole growth by stabilizing a procentriolar seed composed of at least, SASS6 and CPAP. Required for anchoring microtubules to the centrosomes and for the integrity of the microtubule network. Recruits PPARA to discrete subcellular compartments and thereby modulates PPARA activity. Required for ciliation. The sequence is that of Centrosome-associated protein 350 from Mus musculus (Mouse).